A 345-amino-acid polypeptide reads, in one-letter code: Meiotic recombination protein rec12 (345 aa).

Residues 5–137 (DKKKVVRSWI…LNVEASAKGL (133 aa)) enclose the Topo IIA-type catalytic domain. Residue Tyr98 is the O-(5'-phospho-DNA)-tyrosine intermediate of the active site. Glu179 and Asp229 together coordinate Mg(2+).

The protein belongs to the TOP6A family. Component of the DSB catalytic core (DSBC) complex, composed of at least rec12, rec6 and rec14. The complex interacts with mde2. Requires Mg(2+) as cofactor.

It is found in the cytoplasm. The protein resides in the nucleus. The enzyme catalyses ATP-dependent breakage, passage and rejoining of double-stranded DNA.. In terms of biological role, required for formation of the double-strand breaks (DSBs) that initiate meiotic recombination. Required for crossover recombination and chiasmatic segregation of chromosomes during meiosis I. Also involved in the faithful equational segregation of chromosomes during meiosis II. The protein is Meiotic recombination protein rec12 of Schizosaccharomyces pombe (strain 972 / ATCC 24843) (Fission yeast).